The following is a 102-amino-acid chain: Small ribosomal subunit protein uS14m (102 aa).

Belongs to the universal ribosomal protein uS14 family.

It is found in the mitochondrion. This is Small ribosomal subunit protein uS14m (RPS14) from Paramecium tetraurelia.